We begin with the raw amino-acid sequence, 129 residues long: Protein GLUTAMINE DUMPER 2 (129 aa).

Topologically, residues 1 to 34 are extracellular; it reads MQTMEGRQYNYQDSINASSSMVVPHSPWHSPVPY. The helical transmembrane segment at 35-55 threads the bilayer; the sequence is LFGGLAAMLALICVALLILAC. Topologically, residues 56–129 are cytoplasmic; sequence SYWRLSGSAE…DHNEEEGRRG (74 aa). Residues 66–89 form a disordered region; it reads RDLEAGDDAKPDNDTNKTKHTEMP. A VIMAG motif is present at residues 94–98; sequence VIMAG. Residues 106-129 are disordered; that stretch reads ATPATRSEQSCTCGDHNEEEGRRG. Positions 120–129 are enriched in basic and acidic residues; the sequence is DHNEEEGRRG.

The protein belongs to the GLUTAMINE DUMPER 1 (TC 9.B.60) family. Expressed in the vascular tissues.

Its subcellular location is the membrane. Functionally, probable subunit of an amino acid transporter involved in the regulation of the amino acid metabolism. Stimulates amino acid export by activating nonselective amino acid facilitators. This Arabidopsis thaliana (Mouse-ear cress) protein is Protein GLUTAMINE DUMPER 2 (GDU2).